We begin with the raw amino-acid sequence, 312 residues long: Pyridoxal 5'-phosphate synthase subunit PDX1 (312 aa).

A D-ribose 5-phosphate-binding site is contributed by D43. The active-site Schiff-base intermediate with D-ribose 5-phosphate is the K100. G172 provides a ligand contact to D-ribose 5-phosphate. R184 is a D-glyceraldehyde 3-phosphate binding site. D-ribose 5-phosphate contacts are provided by residues G233 and 254–255 (GS).

The protein belongs to the PdxS/SNZ family.

The catalysed reaction is aldehydo-D-ribose 5-phosphate + D-glyceraldehyde 3-phosphate + L-glutamine = pyridoxal 5'-phosphate + L-glutamate + phosphate + 3 H2O + H(+). The protein operates within cofactor biosynthesis; pyridoxal 5'-phosphate biosynthesis. Functionally, catalyzes the formation of pyridoxal 5'-phosphate from ribose 5-phosphate (RBP), glyceraldehyde 3-phosphate (G3P) and ammonia. The ammonia is provided by PDX2. Can also use ribulose 5-phosphate and dihydroxyacetone phosphate as substrates, resulting from enzyme-catalyzed isomerization of RBP and G3P, respectively. Also plays an indirect role in resistance to singlet oxygen-generating photosensitizers. This chain is Pyridoxal 5'-phosphate synthase subunit PDX1 (PDX1), found in Phaseolus vulgaris (Kidney bean).